A 274-amino-acid chain; its full sequence is Rhamnulose-1-phosphate aldolase (274 aa).

Glu-117 is an active-site residue. Zn(2+) contacts are provided by His-141, His-143, and His-212.

It belongs to the aldolase class II family. RhaD subfamily. In terms of assembly, homotetramer. The cofactor is Zn(2+).

It is found in the cytoplasm. It catalyses the reaction L-rhamnulose 1-phosphate = (S)-lactaldehyde + dihydroxyacetone phosphate. The protein operates within carbohydrate degradation; L-rhamnose degradation; glycerone phosphate from L-rhamnose: step 3/3. In terms of biological role, catalyzes the reversible cleavage of L-rhamnulose-1-phosphate to dihydroxyacetone phosphate (DHAP) and L-lactaldehyde. This Escherichia coli O81 (strain ED1a) protein is Rhamnulose-1-phosphate aldolase.